A 350-amino-acid polypeptide reads, in one-letter code: Uroporphyrinogen decarboxylase (350 aa).

Substrate-binding positions include 28-32, Phe47, Asp78, Tyr155, Ser210, and His325; that span reads RQAGR.

The protein belongs to the uroporphyrinogen decarboxylase family. Homodimer.

The protein localises to the cytoplasm. The enzyme catalyses uroporphyrinogen III + 4 H(+) = coproporphyrinogen III + 4 CO2. It functions in the pathway porphyrin-containing compound metabolism; protoporphyrin-IX biosynthesis; coproporphyrinogen-III from 5-aminolevulinate: step 4/4. Catalyzes the decarboxylation of four acetate groups of uroporphyrinogen-III to yield coproporphyrinogen-III. This Nostoc sp. (strain PCC 7120 / SAG 25.82 / UTEX 2576) protein is Uroporphyrinogen decarboxylase.